The following is a 381-amino-acid chain: Protein-glutamate methylesterase/protein-glutamine glutaminase (381 aa).

One can recognise a Response regulatory domain in the interval 8–125 (QVLCIDDSAL…RDGMNEYADQ (118 aa)). 4-aspartylphosphate is present on D59. One can recognise a CheB-type methylesterase domain in the interval 183–375 (FSSTEKLIIV…PHVLARLSAH (193 aa)). Catalysis depends on residues S195, H221, and D317.

It belongs to the CheB family. Post-translationally, phosphorylated by CheA. Phosphorylation of the N-terminal regulatory domain activates the methylesterase activity.

The protein resides in the cytoplasm. The catalysed reaction is [protein]-L-glutamate 5-O-methyl ester + H2O = L-glutamyl-[protein] + methanol + H(+). The enzyme catalyses L-glutaminyl-[protein] + H2O = L-glutamyl-[protein] + NH4(+). Its function is as follows. Involved in chemotaxis. Part of a chemotaxis signal transduction system that modulates chemotaxis in response to various stimuli. Catalyzes the demethylation of specific methylglutamate residues introduced into the chemoreceptors (methyl-accepting chemotaxis proteins or MCP) by CheR. Also mediates the irreversible deamidation of specific glutamine residues to glutamic acid. This Ralstonia nicotianae (strain ATCC BAA-1114 / GMI1000) (Ralstonia solanacearum) protein is Protein-glutamate methylesterase/protein-glutamine glutaminase.